A 437-amino-acid polypeptide reads, in one-letter code: UDP-N-acetylmuramoylalanine--D-glutamate ligase (437 aa).

Residue 112-118 (GSNGKST) coordinates ATP.

Belongs to the MurCDEF family.

The protein localises to the cytoplasm. The catalysed reaction is UDP-N-acetyl-alpha-D-muramoyl-L-alanine + D-glutamate + ATP = UDP-N-acetyl-alpha-D-muramoyl-L-alanyl-D-glutamate + ADP + phosphate + H(+). It functions in the pathway cell wall biogenesis; peptidoglycan biosynthesis. Its function is as follows. Cell wall formation. Catalyzes the addition of glutamate to the nucleotide precursor UDP-N-acetylmuramoyl-L-alanine (UMA). This chain is UDP-N-acetylmuramoylalanine--D-glutamate ligase, found in Haemophilus influenzae (strain PittEE).